Consider the following 241-residue polypeptide: Methylthioribulose-1-phosphate dehydratase (241 aa).

A compositionally biased stretch (basic and acidic residues) spans 1–12 (MSQEITQKDNND). Residues 1–22 (MSQEITQKDNNDHLVQSSDPDH) are disordered. Cys-101 is a substrate binding site. Zn(2+) is bound by residues His-118 and His-120. Glu-147 acts as the Proton donor/acceptor in catalysis. His-203 contacts Zn(2+).

Belongs to the aldolase class II family. MtnB subfamily. The cofactor is Zn(2+).

The protein localises to the cytoplasm. The catalysed reaction is 5-(methylsulfanyl)-D-ribulose 1-phosphate = 5-methylsulfanyl-2,3-dioxopentyl phosphate + H2O. It participates in amino-acid biosynthesis; L-methionine biosynthesis via salvage pathway; L-methionine from S-methyl-5-thio-alpha-D-ribose 1-phosphate: step 2/6. In terms of biological role, catalyzes the dehydration of methylthioribulose-1-phosphate (MTRu-1-P) into 2,3-diketo-5-methylthiopentyl-1-phosphate (DK-MTP-1-P). The sequence is that of Methylthioribulose-1-phosphate dehydratase from Aspergillus terreus (strain NIH 2624 / FGSC A1156).